Reading from the N-terminus, the 380-residue chain is Cytochrome b (380 aa).

The next 4 helical transmembrane spans lie at 34 to 54, 78 to 99, 114 to 134, and 179 to 199; these read FGSL…LLAM, WLIR…YLHI, WNIG…GYVL, and FFAL…VHLT. His84 and His98 together coordinate heme b. His183 and His197 together coordinate heme b. Residue His202 participates in a ubiquinone binding. 4 helical membrane-spanning segments follow: residues 227-247, 289-309, 321-341, and 348-368; these read IKDM…ALFS, LGGV…PLLH, LLPF…WVGS, and FIII…VLFP.

The protein belongs to the cytochrome b family. As to quaternary structure, the cytochrome bc1 complex contains 11 subunits: 3 respiratory subunits (MT-CYB, CYC1 and UQCRFS1), 2 core proteins (UQCRC1 and UQCRC2) and 6 low-molecular weight proteins (UQCRH/QCR6, UQCRB/QCR7, UQCRQ/QCR8, UQCR10/QCR9, UQCR11/QCR10 and a cleavage product of UQCRFS1). This cytochrome bc1 complex then forms a dimer. The cofactor is heme b.

It is found in the mitochondrion inner membrane. Its function is as follows. Component of the ubiquinol-cytochrome c reductase complex (complex III or cytochrome b-c1 complex) that is part of the mitochondrial respiratory chain. The b-c1 complex mediates electron transfer from ubiquinol to cytochrome c. Contributes to the generation of a proton gradient across the mitochondrial membrane that is then used for ATP synthesis. This Gymnorhina tibicen (Australian magpie) protein is Cytochrome b (MT-CYB).